We begin with the raw amino-acid sequence, 144 residues long: Large ribosomal subunit protein uL16 (144 aa).

This sequence belongs to the universal ribosomal protein uL16 family. In terms of assembly, part of the 50S ribosomal subunit.

Functionally, binds 23S rRNA and is also seen to make contacts with the A and possibly P site tRNAs. The sequence is that of Large ribosomal subunit protein uL16 from Halothermothrix orenii (strain H 168 / OCM 544 / DSM 9562).